The following is a 250-amino-acid chain: Ribonuclease PH (250 aa).

Phosphate-binding positions include Arg-86 and 124 to 126 (GTR).

Belongs to the RNase PH family. In terms of assembly, homohexameric ring arranged as a trimer of dimers.

It carries out the reaction tRNA(n+1) + phosphate = tRNA(n) + a ribonucleoside 5'-diphosphate. Its function is as follows. Phosphorolytic 3'-5' exoribonuclease that plays an important role in tRNA 3'-end maturation. Removes nucleotide residues following the 3'-CCA terminus of tRNAs; can also add nucleotides to the ends of RNA molecules by using nucleoside diphosphates as substrates, but this may not be physiologically important. Probably plays a role in initiation of 16S rRNA degradation (leading to ribosome degradation) during starvation. This chain is Ribonuclease PH, found in Shouchella clausii (strain KSM-K16) (Alkalihalobacillus clausii).